The sequence spans 27 residues: Zinc metalloproteinase multactivase catalytic subunit (27 aa).

The Peptidase M12B domain occupies Phe-12–Lys-27. Residue Glu-14 participates in Ca(2+) binding.

Belongs to the venom metalloproteinase (M12B) family. P-III subfamily. P-IIId sub-subfamily. Heterodimer of a metalloproteinase subunit and a regulatory subunit comprising two homologous disulfide-linked lectins (AC P81798). It depends on Zn(2+) as a cofactor. Expressed by the venom gland.

The protein resides in the secreted. Its function is as follows. This carinactivase-like calcium-dependent prothrombin (F2) activator activates prothrombin via recognition of the calcium ion bound conformation of its gamma-carboxyglutamic acid (GLA) domain, and the subsequent conversion of prothrombin to active thrombin is catalyzed by the catalytic subunit. The polypeptide is Zinc metalloproteinase multactivase catalytic subunit (Echis multisquamatus (Central Asian sand viper)).